The following is a 296-amino-acid chain: MGAQIRVYRQKISSTTSMRKIFKAMELIATSRIGKARARVAASLPYANAITRAVSAVASQSEIDHPLTTEPEQIRRAAVLVITSDRGLAGSYSASVLKQAEGLNELLHAEGKEVKTYLVGRKSQAYFDFRNREYARVWTGGTDAPEFGTAREIGAALLADFAADFEDGGVDEIHVVYTRFKSMVTQEPTVIRLLPLEVVEEEAASESDLLPLYEFEPETEQVLDALLPRYIESRLFAAMLQAAASELAARQRAMKSAGDNATDLIKKYTRLRNTARQAEITQELSEIVAGADALAS.

This sequence belongs to the ATPase gamma chain family. As to quaternary structure, F-type ATPases have 2 components, CF(1) - the catalytic core - and CF(0) - the membrane proton channel. CF(1) has five subunits: alpha(3), beta(3), gamma(1), delta(1), epsilon(1). CF(0) has three main subunits: a, b and c.

It localises to the cell membrane. Its function is as follows. Produces ATP from ADP in the presence of a proton gradient across the membrane. The gamma chain is believed to be important in regulating ATPase activity and the flow of protons through the CF(0) complex. The protein is ATP synthase gamma chain of Pseudarthrobacter chlorophenolicus (strain ATCC 700700 / DSM 12829 / CIP 107037 / JCM 12360 / KCTC 9906 / NCIMB 13794 / A6) (Arthrobacter chlorophenolicus).